Here is a 78-residue protein sequence, read N- to C-terminus: Acyl carrier protein (78 aa).

In terms of domain architecture, Carrier spans 2–77; that stretch reads SNIEQQVKKI…LAIDYINAHN (76 aa). O-(pantetheine 4'-phosphoryl)serine is present on S37.

Belongs to the acyl carrier protein (ACP) family. In terms of processing, 4'-phosphopantetheine is transferred from CoA to a specific serine of apo-ACP by AcpS. This modification is essential for activity because fatty acids are bound in thioester linkage to the sulfhydryl of the prosthetic group.

The protein resides in the cytoplasm. It participates in lipid metabolism; fatty acid biosynthesis. Carrier of the growing fatty acid chain in fatty acid biosynthesis. This Neisseria meningitidis serogroup C / serotype 2a (strain ATCC 700532 / DSM 15464 / FAM18) protein is Acyl carrier protein.